The chain runs to 391 residues: Succinate--CoA ligase [ADP-forming] subunit beta (391 aa).

Residues 9–245 enclose the ATP-grasp domain; the sequence is KQIFAKYGVP…ISEEDADERE (237 aa). Residues K46, 53-55, E99, A102, and E107 contribute to the ATP site; that span reads GRG. Residues N200 and D214 each coordinate Mg(2+). Residues N265 and 322-324 each bind substrate; that span reads GIV.

Belongs to the succinate/malate CoA ligase beta subunit family. In terms of assembly, heterotetramer of two alpha and two beta subunits. Mg(2+) is required as a cofactor.

The catalysed reaction is succinate + ATP + CoA = succinyl-CoA + ADP + phosphate. The enzyme catalyses GTP + succinate + CoA = succinyl-CoA + GDP + phosphate. The protein operates within carbohydrate metabolism; tricarboxylic acid cycle; succinate from succinyl-CoA (ligase route): step 1/1. In terms of biological role, succinyl-CoA synthetase functions in the citric acid cycle (TCA), coupling the hydrolysis of succinyl-CoA to the synthesis of either ATP or GTP and thus represents the only step of substrate-level phosphorylation in the TCA. The beta subunit provides nucleotide specificity of the enzyme and binds the substrate succinate, while the binding sites for coenzyme A and phosphate are found in the alpha subunit. This is Succinate--CoA ligase [ADP-forming] subunit beta from Sulfurimonas denitrificans (strain ATCC 33889 / DSM 1251) (Thiomicrospira denitrificans (strain ATCC 33889 / DSM 1251)).